Consider the following 238-residue polypeptide: Aspirochlorine biosynthesis protein N (238 aa).

This sequence belongs to the asaB hydroxylase/desaturase family.

Its pathway is mycotoxin biosynthesis. Part of the gene cluster that mediates the biosynthesis of aspirochlorine (or antibiotic A30641), an unusual halogenated spiro compound with distinctive antifungal properties due to selective inhibition of protein biosynthesis, and which is also active against bacteria, viruses, and murine tumor cells. The non-ribosomal peptide synthetase (NRPS) aclP is responsible the formation of the diketopiperazine (DKP) core from the condensation of 2 phenylalanine residues. One Phe residue is tailored into chlorotyrosine by hydroxylation and chlorination, whereas the second Phe undergoes an unprecedented C-C bond cleavage to be converted into glycine. After formation of the DKP, sulfur is incorporated into the DKP by conjugation with glutathione by aclG, followed by its stepwise degradation to the thiol by aclI, aclJ and aclK, and the dithiol oxidation by aclT. In addition, oxygenases (aclB, aclC, aclL and aclO) and O-methyltransferases (aclM and aclU) act as tailoring enzymes to produce the intermediate dechloroaspirochlorine. Ultimately, chlorination of dechloroaspirochlorine by the halogenase aclH is the last step in the aspirochlorine pathway. This is Aspirochlorine biosynthesis protein N from Aspergillus oryzae (strain ATCC 42149 / RIB 40) (Yellow koji mold).